Consider the following 231-residue polypeptide: MGQKVNPTGIRLGITKPFASTWFASNKDFASNLDGDHKVREFLKEKLKRASLSKVVIERPAKSIRVTIHTARPGVVIGKKGEDVEKLRLAVSKIAGVPAQINIAEVRKPEMDAQLVADSIASQLERRVMFRRAMKRAVQNAMRLGAKGIKVQVSGRLGGADIARAEWYREGRVPLHTLRADIDYAIARGNTTYGVIGIKVWIFKGEIIGNMPLQAEVPAAKPKRKTNRKPK.

Positions 39–107 constitute a KH type-2 domain; that stretch reads VREFLKEKLK…PAQINIAEVR (69 aa).

Belongs to the universal ribosomal protein uS3 family. In terms of assembly, part of the 30S ribosomal subunit. Forms a tight complex with proteins S10 and S14.

Binds the lower part of the 30S subunit head. Binds mRNA in the 70S ribosome, positioning it for translation. The sequence is that of Small ribosomal subunit protein uS3 from Colwellia psychrerythraea (strain 34H / ATCC BAA-681) (Vibrio psychroerythus).